A 470-amino-acid chain; its full sequence is Putative multidrug resistance protein MdtD (470 aa).

At 1–11 the chain is on the periplasmic side; sequence MTELPDNTRWQ. A helical transmembrane segment spans residues 12-32; it reads LWIVAFGFFMQSLDTTIVNTA. Residues 33–48 are Cytoplasmic-facing; sequence LPSMAKSLGESPLHMH. The chain crosses the membrane as a helical span at residues 49–69; the sequence is MVVVSYVLTVAVMLPASGWLA. The Periplasmic portion of the chain corresponds to 70-76; that stretch reads DKIGVRN. Residues 77 to 97 form a helical membrane-spanning segment; sequence IFFAAIVLFTLGSLFCALSGT. Over 98 to 101 the chain is Cytoplasmic; sequence LNQL. Residues 102–124 form a helical membrane-spanning segment; it reads VLARVLQGVGGAMMVPVGRLTVM. At 125–137 the chain is on the periplasmic side; sequence KIVPRAQYMAAMT. A helical transmembrane segment spans residues 138–158; that stretch reads FVTLPGQIGPLLGPALGGVLV. Residues 159–164 lie on the Cytoplasmic side of the membrane; that stretch reads EYASWH. A helical transmembrane segment spans residues 165 to 185; it reads WIFLINIPVGIVGAMATFMLM. The Periplasmic segment spans residues 186–196; it reads PNYTIETRRFD. The chain crosses the membrane as a helical span at residues 197 to 217; sequence LPGFLLLAIGMAVLTLALDGS. At 218 to 224 the chain is on the cytoplasmic side; it reads KSMGISP. A helical membrane pass occupies residues 225–245; sequence WTLAGLAAGGAAAILLYLFHA. The Periplasmic segment spans residues 246–262; that stretch reads KKSSGALFSLRLFRTPT. Residues 263–283 form a helical membrane-spanning segment; sequence FSLGLLGSFAGRIGSGMLPFM. Over 284–285 the chain is Cytoplasmic; the sequence is TP. The chain crosses the membrane as a helical span at residues 286 to 306; it reads VFLQIGLGFSPFHAGLMMIPM. Residues 307-341 are Periplasmic-facing; sequence VLGSMGMKRIVVQIVNRFGYRRVLVATTLGLALVS. Residues 342–362 form a helical membrane-spanning segment; sequence LLFMSVALLGWYYLLPLVLLL. The Cytoplasmic portion of the chain corresponds to 363-395; it reads QGMVNSARFSSMNTLTLKDLPDTLASSGNSLLS. Residues 396–416 traverse the membrane as a helical segment; sequence MIMQLSMSIGVTIAGMLLGMF. Over 417–430 the chain is Periplasmic; it reads GQQHIGIDSSATHH. A helical membrane pass occupies residues 431–451; the sequence is VFMYTWLCMAVIIALPAIIFA. Residues 452-470 lie on the Cytoplasmic side of the membrane; sequence RVPNDTQQNMVISRRKRSL.

Belongs to the major facilitator superfamily. TCR/Tet family.

The protein localises to the cell inner membrane. This chain is Putative multidrug resistance protein MdtD, found in Salmonella paratyphi A (strain ATCC 9150 / SARB42).